A 175-amino-acid polypeptide reads, in one-letter code: Probable RNA-binding protein EIF1AD (175 aa).

The S1-like domain occupies 5–89; that stretch reads TKKRYITNKV…VKGEIEYILD (85 aa). Residues 116–128 show a composition bias toward basic and acidic residues; it reads EAKRGQTSDKMID. Residues 116–175 form a disordered region; it reads EAKRGQTSDKMIDDDMLPPSESEEEDESEGEETYDEDDVDDEEEEEFDTYNPNRMQAPSK. Residues 129 to 163 are compositionally biased toward acidic residues; sequence DDMLPPSESEEEDESEGEETYDEDDVDDEEEEEFD. Residues 165-175 show a composition bias toward polar residues; that stretch reads YNPNRMQAPSK.

It belongs to the EIF1AD family.

This is Probable RNA-binding protein EIF1AD from Caenorhabditis elegans.